The sequence spans 1383 residues: NPC intracellular cholesterol transporter 1 homolog 1 (1383 aa).

The N-terminal stretch at 1-20 (MKQLLIFCLLFGSIFHHGDA) is a signal peptide. Disulfide bonds link Cys-22/Cys-76, Cys-28/Cys-39, Cys-65/Cys-111, Cys-77/Cys-115, Cys-99/Cys-246, Cys-102/Cys-167, Cys-182/Cys-187, and Cys-235/Cys-251. A glycan (N-linked (GlcNAc...) asparagine) is linked at Asn-42. N-linked (GlcNAc...) asparagine glycosylation is present at Asn-231. A run of 2 helical transmembrane segments spans residues 282-302 (IFVM…GFVF) and 353-373 (PKSH…GMIY). An N-linked (GlcNAc...) asparagine glycan is attached at Asn-447. 2 disulfides stabilise this stretch: Cys-464/Cys-474 and Cys-526/Cys-541. Residue Asn-558 is glycosylated (N-linked (GlcNAc...) asparagine). The next 6 membrane-spanning stretches (helical) occupy residues 627-647 (EIVT…FSLG), 665-685 (ICLG…SWGI), 697-717 (ALVV…FMVV), 746-766 (TMPA…IGGF), 780-800 (GLAV…LFVW), and 856-876 (IITG…SSKI). The region spanning 627-800 (EIVTVVIALA…CTIFLALFVW (174 aa)) is the SSD domain. Intrachain disulfides connect Cys-929–Cys-934, Cys-976–Cys-1046, Cys-977–Cys-1005, and Cys-988–Cys-1002. Residues Asn-993 and Asn-1082 are each glycosylated (N-linked (GlcNAc...) asparagine). Helical transmembrane passes span 1126-1146 (IMPI…GIIC), 1157-1177 (ACAV…MYIF), 1179-1199 (IPVN…LIEF), 1226-1246 (IGPI…MFLS), and 1260-1280 (LFLI…PILL).

It belongs to the patched family.

The protein localises to the membrane. It catalyses the reaction cholesterol(in) = cholesterol(out). Its function is as follows. Involved in the uptake or utilization of cholesterol. Ncr-1 and ncr-2 act redundantly to prevent dauer larva formation under favorable growth conditions, and are required for the normal functioning of ADF, ASI and ASG neurons. This is NPC intracellular cholesterol transporter 1 homolog 1 from Caenorhabditis elegans.